Reading from the N-terminus, the 295-residue chain is Sulfotransferase 1A3 (295 aa).

48 to 53 (KSGTTW) is a binding site for 3'-phosphoadenylyl sulfate. Residues aspartate 86 and 106–108 (KSH) contribute to the dopamine site. Histidine 108 functions as the Proton acceptor in the catalytic mechanism. The 3'-phosphoadenylyl sulfate site is built by arginine 130 and serine 138. Glutamate 146 is a binding site for dopamine. Residues tyrosine 193, 227 to 232 (TSFKEM), and 257 to 259 (RKG) each bind 3'-phosphoadenylyl sulfate.

This sequence belongs to the sulfotransferase 1 family. In terms of assembly, homodimer. In terms of processing, the N-terminus is blocked. In terms of tissue distribution, liver, colon, kidney, lung, brain, spleen, small intestine, placenta and leukocyte.

It localises to the cytoplasm. The enzyme catalyses a phenol + 3'-phosphoadenylyl sulfate = an aryl sulfate + adenosine 3',5'-bisphosphate + H(+). It carries out the reaction 4-nitrophenol + 3'-phosphoadenylyl sulfate = 4-nitrophenyl sulfate + adenosine 3',5'-bisphosphate. It catalyses the reaction dopamine + 3'-phosphoadenylyl sulfate = dopamine 3-O-sulfate + adenosine 3',5'-bisphosphate + H(+). The catalysed reaction is dopamine + 3'-phosphoadenylyl sulfate = dopamine 4-O-sulfate + adenosine 3',5'-bisphosphate + H(+). The enzyme catalyses serotonin + 3'-phosphoadenylyl sulfate = serotonin O-sulfate + adenosine 3',5'-bisphosphate + H(+). It carries out the reaction (R)-adrenaline + 3'-phosphoadenylyl sulfate = (R)-adrenaline 4'-O-sulfate + adenosine 3',5'-bisphosphate + H(+). It catalyses the reaction (R)-noradrenaline + 3'-phosphoadenylyl sulfate = (R)-noradrenaline 4'-O-sulfate + adenosine 3',5'-bisphosphate + H(+). The catalysed reaction is 3,3',5-triiodo-L-thyronine + 3'-phosphoadenylyl sulfate = 3,3',5-triiodo-L-thyronine sulfate + adenosine 3',5'-bisphosphate + H(+). The enzyme catalyses 3,3',5'-triiodo-L-thyronine + 3'-phosphoadenylyl sulfate = 3,3',5'-triiodo-L-thyronine sulfate + adenosine 3',5'-bisphosphate + H(+). It carries out the reaction 3,3'-diiodo-L-thyronine + 3'-phosphoadenylyl sulfate = 3,3'-diiodo-L-thyronine sulfate + adenosine 3',5'-bisphosphate + H(+). It catalyses the reaction L-thyroxine + 3'-phosphoadenylyl sulfate = L-thyroxine sulfate + adenosine 3',5'-bisphosphate + H(+). Functionally, sulfotransferase that utilizes 3'-phospho-5'-adenylyl sulfate (PAPS) as sulfonate donor to catalyze the sulfate conjugation of phenolic monoamines (neurotransmitters such as dopamine, (R)-adrenaline/epinephrine, (R)-noradrenaline/norepinephrine and serotonin) and phenolic and catechol drugs. Catalyzes the sulfation of T4 (L-thyroxine/3,5,3',5'-tetraiodothyronine), T3 (3,5,3'-triiodothyronine), rT3 (3,3',5'-triiodothyronine) and 3,3'-T2 (3,3'-diiodothyronine), with a substrate preference of 3,3'-T2 &gt; rT3 &gt; T3 &gt; T4. The sequence is that of Sulfotransferase 1A3 (SULT1A3) from Homo sapiens (Human).